The primary structure comprises 692 residues: Catalase-B (692 aa).

Active-site residues include His-69 and Asn-142. Position 356 (Tyr-356) interacts with heme.

Belongs to the catalase family. Heme serves as cofactor.

The protein resides in the cytoplasm. It carries out the reaction 2 H2O2 = O2 + 2 H2O. Functionally, occurs in almost all aerobically respiring organisms and serves to protect cells from the toxic effects of hydrogen peroxide. Its accumulation in prespore cells affords the spores protection from oxidation during prolonged dormancy. Required for normal developmental timing, possibly through a regulatory role in differentiation and morphogenesis. In Dictyostelium discoideum (Social amoeba), this protein is Catalase-B (catB).